The following is a 708-amino-acid chain: Glutamate--tRNA ligase, cytoplasmic (708 aa).

Interaction with ARC1 regions lie at residues 106-115 (NLRTFILGGL) and 141-157 (KVDV…EMDP). An L-glutamate-binding site is contributed by 205–207 (RFP). Positions 210–219 (PSGYLHIGHA) match the 'HIGH' region motif. Residue histidine 215 participates in ATP binding. Aspartate 241 is a binding site for L-glutamate. Threonine 300 is subject to Phosphothreonine. L-glutamate is bound by residues 382-386 (YDFCV) and arginine 400. ATP-binding positions include glutamate 403 and 437–441 (LLSKR). The 'KMSKS' region motif lies at 437 to 441 (LLSKR).

The protein belongs to the class-I aminoacyl-tRNA synthetase family. Glutamate--tRNA ligase type 2 subfamily. Component of a yeast aminoacyl-tRNA synthase (aaRS) complex formed by methionyl-tRNA synthase MES1, glutamyl-tRNA synthase GUS1 and the tRNA aminoacylation cofactor ARC1 in a stoichiometric complex. Interacts (via N-ter) with ARC1 (via N-ter). Can also form a stable binary complex with ARC1 that is functional in terms of aminoacylation. ARC1 increases the affinity for cognate tRNAs due to the presence of a tRNA binding domain in the middle and C-terminal part of ARC1.

Its subcellular location is the cytoplasm. It is found in the mitochondrion. It catalyses the reaction tRNA(Glu) + L-glutamate + ATP = L-glutamyl-tRNA(Glu) + AMP + diphosphate. Functionally, catalyzes the attachment of glutamate to tRNA(Glu) in a two-step reaction: glutamate is first activated by ATP to form Glu-AMP and then transferred to the acceptor end of tRNA(Glu). In mitochondria, constitutes the nondiscriminating glutamyl-tRNA synthase that generates the mitochondrial mischarged glutamyl-tRNA(Gln) substrate for the tRNA-dependent amidotransferase (AdT), which generates mitochondrial glutaminyl-tRNA(Gln) by transamidation of glutamyl-tRNA(Gln). This is Glutamate--tRNA ligase, cytoplasmic (GUS1) from Saccharomyces cerevisiae (strain ATCC 204508 / S288c) (Baker's yeast).